Reading from the N-terminus, the 496-residue chain is MDISISWVAIILVISSYFIFMNKWRAAKLPENLPPSPPKLPVIGHLHLLRGGLPQHVLRGITQKYGAVAHLQLGEVYSVVLSSAESTKQAMKVLDPTFADRFDSIGSQIMWYNNNDMIFSRYNDHWRQIRKICVSELLSPKNVRSFGFIRQDEMARLIRVFESSVGVPINASEEISKMSCAIVCRAAFGSVLKDQGLLADLVKEALGMASGFELADLYPSSWLLNLLCFNKYRLRRMRQRLDDILDGFLEEHRVKKSGEFGGEDIIDVLYRMQKDSENKVPITNSGIKGFIFDVFSAGTETSATTIQWALSELMKNPEKLAKAQAEVREKLKGKTNPDVAEVQEIKYLHSVVKETLRLHPPFPLIPRLCKEECEVTGYTIPAKTRILVNVWSIGRDPAYWKDPDTFNPDRFDEVSRDVIGNDFELIPFGAGRRICPGLHFGLANVEVPLAQLLYHFEWKLPQGMTPADMDMSETPGLSGPRKNPLIMVPTIHNPTS.

A helical; Signal-anchor for type II membrane protein membrane pass occupies residues 1–21 (MDISISWVAIILVISSYFIFM). Cys-435 contacts heme. The disordered stretch occupies residues 471-496 (MSETPGLSGPRKNPLIMVPTIHNPTS).

The protein belongs to the cytochrome P450 family. Requires heme as cofactor. As to expression, expressed at low levels in flowers, leaves and stems.

Its subcellular location is the membrane. The enzyme catalyses alpha-terpinene + 2 reduced [NADPH--hemoprotein reductase] + 2 O2 = carvacrol + 2 oxidized [NADPH--hemoprotein reductase] + 3 H2O + 2 H(+). It carries out the reaction gamma-terpinene + 2 reduced [NADPH--hemoprotein reductase] + 2 O2 = carvacrol + 2 oxidized [NADPH--hemoprotein reductase] + 3 H2O + 2 H(+). It catalyses the reaction (4S)-limonene + reduced [NADPH--hemoprotein reductase] + O2 = (1S,5R)-carveol + oxidized [NADPH--hemoprotein reductase] + H2O + H(+). The catalysed reaction is (4R)-limonene + reduced [NADPH--hemoprotein reductase] + O2 = (1R,5S)-carveol + oxidized [NADPH--hemoprotein reductase] + H2O + H(+). It functions in the pathway secondary metabolite biosynthesis; terpenoid biosynthesis. Functionally, involved in the biosynthesis of phenolic monoterpenes natural products thymol and carvacrol which have a broad range of biological activities acting as antimicrobial compounds, insecticides, antioxidants and pharmaceutical agents. Catalyzes the C2-hydroxylation of gamma-terpinene and alpha-terpinene to produce carvacrol. Also mediates the C6-hydroxylation of (4S)-limonene and (4R)-limonene to form carveol. The sequence is that of Cytochrome P450 71D181 from Origanum vulgare (Wild marjoram).